Reading from the N-terminus, the 426-residue chain is Selenate reductase subunit C (426 aa).

10 consecutive transmembrane segments (helical) span residues 5 to 25 (LYFTVLSFIAIVGVISLYIRL), 40 to 60 (WGLWIVFYIYFIGLSAGSFLL), 78 to 98 (LALFTAFFSLMAGLLFVLIDL), 119 to 139 (WEIQFYLIYMLLIVAEIWFLM), 187 to 207 (ILGIAGIPTAVGVHGGTGSLF), 223 to 243 (IIFLVSALVSGAALMLFLYSF), 261 to 281 (LLTLFIGIDLLLMIAEFLIGL), 302 to 322 (FIFWIGQIGMVIILPILLITI), 330 to 350 (MGLAGLSVVLGIVCVRWILVI), and 385 to 405 (VGLIGIVILLFSITVQLVPVF).

It belongs to the NrfD family. In terms of assembly, the complex is composed of three subunits: SrdA, SrdB and SrdC.

The protein resides in the cell membrane. The catalysed reaction is selenite + a quinone + H2O = selenate + a quinol. Functionally, component of the respiratory selenate reductase complex, which catalyzes the reduction of selenate to selenite. This subunit probably receives electrons directly from the membrane quinone pool and transfers the electrons to the iron-sulfur clusters of SrdB. May be the membrane anchor protein subunit of the complex. This is Selenate reductase subunit C from Mesobacillus selenatarsenatis (strain DSM 18680 / JCM 14380 / FERM P-15431 / SF-1).